A 1293-amino-acid chain; its full sequence is Phosphoribosylformylglycinamidine synthase (1293 aa).

ATP contacts are provided by residues 305–316 (GAATGSGGEIRD), 384–386 (TGY), and Ala-676. The interval 307 to 326 (ATGSGGEIRDEGATGRGSKP) is disordered. Residues Asp-677, Glu-716, Asn-720, and Asp-884 each contribute to the Mg(2+) site. Ser-886 lines the ATP pocket. The region spanning 1040-1293 (MAILREQGVN…MFRNARVKIG (254 aa)) is the Glutamine amidotransferase type-1 domain. Cys-1133 functions as the Nucleophile in the catalytic mechanism. Residues His-1258 and Glu-1260 contribute to the active site.

This sequence in the N-terminal section; belongs to the FGAMS family. Monomer.

The protein localises to the cytoplasm. It carries out the reaction N(2)-formyl-N(1)-(5-phospho-beta-D-ribosyl)glycinamide + L-glutamine + ATP + H2O = 2-formamido-N(1)-(5-O-phospho-beta-D-ribosyl)acetamidine + L-glutamate + ADP + phosphate + H(+). The protein operates within purine metabolism; IMP biosynthesis via de novo pathway; 5-amino-1-(5-phospho-D-ribosyl)imidazole from N(2)-formyl-N(1)-(5-phospho-D-ribosyl)glycinamide: step 1/2. Phosphoribosylformylglycinamidine synthase involved in the purines biosynthetic pathway. Catalyzes the ATP-dependent conversion of formylglycinamide ribonucleotide (FGAR) and glutamine to yield formylglycinamidine ribonucleotide (FGAM) and glutamate. The polypeptide is Phosphoribosylformylglycinamidine synthase (Shewanella frigidimarina (strain NCIMB 400)).